We begin with the raw amino-acid sequence, 183 residues long: Nucleoside diphosphate kinase (183 aa).

K11 provides a ligand contact to ATP. Residues 56-88 form an insert region; sequence EWLRSAGQKLLKAYQELGIDPRAKIGTDDPVEV. R120, T126, R137, and N157 together coordinate ATP. The active-site Pros-phosphohistidine intermediate is the H160.

Belongs to the NDK family. It depends on Mg(2+) as a cofactor.

It localises to the cytoplasm. It carries out the reaction a 2'-deoxyribonucleoside 5'-diphosphate + ATP = a 2'-deoxyribonucleoside 5'-triphosphate + ADP. It catalyses the reaction a ribonucleoside 5'-diphosphate + ATP = a ribonucleoside 5'-triphosphate + ADP. Its function is as follows. Major role in the synthesis of nucleoside triphosphates other than ATP. The ATP gamma phosphate is transferred to the NDP beta phosphate via a ping-pong mechanism, using a phosphorylated active-site intermediate. The chain is Nucleoside diphosphate kinase (ndk) from Pyrobaculum aerophilum (strain ATCC 51768 / DSM 7523 / JCM 9630 / CIP 104966 / NBRC 100827 / IM2).